Reading from the N-terminus, the 460-residue chain is Kynureninase (460 aa).

Pyridoxal 5'-phosphate is bound by residues L116, T117, 144-147, S199, D228, H231, and Y253; that span reads FPSD. K254 carries the post-translational modification N6-(pyridoxal phosphate)lysine. Positions 288 and 316 each coordinate pyridoxal 5'-phosphate.

It belongs to the kynureninase family. Homodimer. Pyridoxal 5'-phosphate is required as a cofactor.

It is found in the cytoplasm. It catalyses the reaction L-kynurenine + H2O = anthranilate + L-alanine + H(+). The catalysed reaction is 3-hydroxy-L-kynurenine + H2O = 3-hydroxyanthranilate + L-alanine + H(+). Its pathway is amino-acid degradation; L-kynurenine degradation; L-alanine and anthranilate from L-kynurenine: step 1/1. It functions in the pathway cofactor biosynthesis; NAD(+) biosynthesis; quinolinate from L-kynurenine: step 2/3. In terms of biological role, catalyzes the cleavage of L-kynurenine (L-Kyn) and L-3-hydroxykynurenine (L-3OHKyn) into anthranilic acid (AA) and 3-hydroxyanthranilic acid (3-OHAA), respectively. The protein is Kynureninase of Debaryomyces hansenii (strain ATCC 36239 / CBS 767 / BCRC 21394 / JCM 1990 / NBRC 0083 / IGC 2968) (Yeast).